Reading from the N-terminus, the 232-residue chain is Ion-translocating oxidoreductase complex subunit E (232 aa).

A run of 6 helical transmembrane segments spans residues 18-38, 39-59, 69-89, 93-113, 128-148, and 182-202; these read ALVQLLGLCPLLAVTATVTNG, LGLGLATTLVLIGSNATVSII, IPIFVMIIAAFVTVVQLLMNA, ELYQALGIFIPLIVTNCAIIG, AFDGLMMGLGFTVVLVLLGAM, and PFLLAILPPGAFLGMGLLIAA.

It belongs to the NqrDE/RnfAE family. In terms of assembly, the complex is composed of six subunits: RnfA, RnfB, RnfC, RnfD, RnfE and RnfG.

It is found in the cell inner membrane. Functionally, part of a membrane-bound complex that couples electron transfer with translocation of ions across the membrane. This chain is Ion-translocating oxidoreductase complex subunit E, found in Pseudoalteromonas atlantica (strain T6c / ATCC BAA-1087).